The sequence spans 504 residues: Prenylcysteine oxidase 1 (504 aa).

The signal sequence occupies residues 1 to 28 (MGRFAATLVGSLFGLGLLLCGLGRLASA). N-linked (GlcNAc...) asparagine glycans are attached at residues N196, N322, and N352.

Belongs to the prenylcysteine oxidase family. It depends on FAD as a cofactor. Expressed mainly in cerebrum.

It is found in the lysosome. It carries out the reaction an S-polyprenyl-L-cysteine + O2 + H2O = a polyprenal + L-cysteine + H2O2. The enzyme catalyses S-(2E,6E)-farnesyl-L-cysteine + O2 + H2O = (2E,6E)-farnesal + L-cysteine + H2O2. It catalyses the reaction [(2E,6E,10E)-geranylgeranyl]-L-cysteine + O2 + H2O = (2E,6E,10E)-geranylgeranial + L-cysteine + H2O2. Its function is as follows. Prenylcysteine oxidase that cleaves the thioether bond of prenyl-L-cysteines, such as farnesylcysteine and geranylgeranylcysteine. Only active against free prenylcysteines and not prenylcysteine residues within prenylated proteins or peptides. Involved in the final step in the degradation of prenylated proteins, by degrading prenylcysteines after the protein has been degraded. The chain is Prenylcysteine oxidase 1 from Rattus norvegicus (Rat).